A 1199-amino-acid chain; its full sequence is DNA-directed RNA polymerase subunit beta' (1199 aa).

Residues Cys-60, Cys-62, Cys-75, and Cys-78 each contribute to the Zn(2+) site. Mg(2+) contacts are provided by Asp-449, Asp-451, and Asp-453. Zn(2+) is bound by residues Cys-818, Cys-892, Cys-899, and Cys-902.

The protein belongs to the RNA polymerase beta' chain family. In terms of assembly, the RNAP catalytic core consists of 2 alpha, 1 beta, 1 beta' and 1 omega subunit. When a sigma factor is associated with the core the holoenzyme is formed, which can initiate transcription. Requires Mg(2+) as cofactor. The cofactor is Zn(2+).

It carries out the reaction RNA(n) + a ribonucleoside 5'-triphosphate = RNA(n+1) + diphosphate. Functionally, DNA-dependent RNA polymerase catalyzes the transcription of DNA into RNA using the four ribonucleoside triphosphates as substrates. The polypeptide is DNA-directed RNA polymerase subunit beta' (Geobacillus kaustophilus (strain HTA426)).